Consider the following 174-residue polypeptide: ATP synthase subunit d, mitochondrial (174 aa).

An N-acetylserine modification is found at S2.

This sequence belongs to the ATPase d subunit family. In terms of assembly, F-type ATPases have 2 components, CF(1) - the catalytic core - and CF(0) - the membrane proton channel. In yeast, the dimeric form of ATP synthase consists of 17 polypeptides: alpha, beta, gamma, delta, epsilon, 4 (B), 5 (OSCP), 6 (A), 8, 9 (C), d, E (Tim11), f, g, h, i/j and k.

Its subcellular location is the mitochondrion. It localises to the mitochondrion inner membrane. Its function is as follows. Mitochondrial membrane ATP synthase (F(1)F(0) ATP synthase or Complex V) produces ATP from ADP in the presence of a proton gradient across the membrane which is generated by electron transport complexes of the respiratory chain. F-type ATPases consist of two structural domains, F(1) - containing the extramembraneous catalytic core, and F(0) - containing the membrane proton channel, linked together by a central stalk and a peripheral stalk. During catalysis, ATP synthesis in the catalytic domain of F(1) is coupled via a rotary mechanism of the central stalk subunits to proton translocation. Part of the complex F(0) domain and the peripheric stalk, which acts as a stator to hold the catalytic alpha(3)beta(3) subcomplex and subunit a/ATP6 static relative to the rotary elements. This chain is ATP synthase subunit d, mitochondrial (ATP7), found in Saccharomyces cerevisiae (strain ATCC 204508 / S288c) (Baker's yeast).